The primary structure comprises 56 residues: Large ribosomal subunit protein bL33 (56 aa).

Belongs to the bacterial ribosomal protein bL33 family.

The polypeptide is Large ribosomal subunit protein bL33 (Haemophilus influenzae (strain 86-028NP)).